We begin with the raw amino-acid sequence, 323 residues long: Olfactory receptor 4K5 (323 aa).

At 1 to 25 (MDKSNSSVVSEFVLLGLCSSQKLQL) the chain is on the extracellular side. A glycan (N-linked (GlcNAc...) asparagine) is linked at Asn5. A helical membrane pass occupies residues 26–49 (FYFCFFSVLYTVIVLGNLLIILTV). Residues 50 to 57 (TSDTSLHS) lie on the Cytoplasmic side of the membrane. A helical membrane pass occupies residues 58–79 (PMYFLLGNLSFVDICQASFATP). Residues 80-100 (KMIADFLSAHETISFSGCIAQ) are Extracellular-facing. A disulfide bond links Cys97 and Cys189. A helical transmembrane segment spans residues 101 to 120 (IFFIHLFTGGEMVLLVSMAY). The Cytoplasmic portion of the chain corresponds to 121–139 (DRYVAICKPLYYVVIMSRR). Residues 140-158 (TCTVLVMISWAVSLVHTLS) traverse the membrane as a helical segment. Topologically, residues 159–195 (QLSFTVNLPFCGPNVVDSFFCDLPRVTKLACLDSYII) are extracellular. Residues 196–219 (EILIVVNSGILSLSTFSLLVSSYI) traverse the membrane as a helical segment. Residues 220–235 (IILVTVWLKSSAAMAK) lie on the Cytoplasmic side of the membrane. The helical transmembrane segment at 236-258 (AFSTLASHIAVVILFFGPCIFIY) threads the bilayer. Over 259–269 (VWPFTISPLDK) the chain is Extracellular. Residues 270 to 289 (FLAIFYTVFTPVLNPIIYTL) form a helical membrane-spanning segment. Residues 290–323 (RNRDMKAAVRKIVNHYLRPRRISEMSLVVRTSFH) are Cytoplasmic-facing.

Belongs to the G-protein coupled receptor 1 family.

It localises to the cell membrane. Functionally, odorant receptor. This is Olfactory receptor 4K5 (OR4K5) from Homo sapiens (Human).